Reading from the N-terminus, the 1862-residue chain is Transient receptor potential cation channel subfamily M member 7 (1862 aa).

Met-1 is subject to N-acetylmethionine. The Cytoplasmic segment spans residues Met-1–His-850. Ser-101 is subject to Phosphoserine. A compositionally biased stretch (low complexity) spans Asn-544 to Ser-554. The interval Asn-544–Lys-574 is disordered. Over residues Lys-560–Glu-573 the composition is skewed to basic and acidic residues. A helical transmembrane segment spans residues Ala-851–Val-876. Topologically, residues Gln-877–Pro-882 are extracellular. A helical membrane pass occupies residues Ser-883 to Val-904. The Cytoplasmic segment spans residues Phe-905–Tyr-923. A helical membrane pass occupies residues Phe-924–Phe-943. The Extracellular segment spans residues Gly-944–His-956. The chain crosses the membrane as a helical span at residues Val-957–Leu-980. Over Ala-981–Asn-999 the chain is Cytoplasmic. The helical transmembrane segment at Met-1000–Tyr-1023 threads the bilayer. Over Pro-1024–His-1025 the chain is Extracellular. Positions Glu-1026–Cys-1066 form an intramembrane region, pore-forming. Residues Gly-1067–Gly-1069 lie on the Extracellular side of the membrane. Residues Thr-1070–Asn-1098 form a helical membrane-spanning segment. Residues Val-1099–Leu-1862 lie on the Cytoplasmic side of the membrane. Residues Cys-1143, Cys-1144, and Cys-1146 are each lipidated (S-palmitoyl cysteine). Thr-1163 bears the Phosphothreonine mark. A phosphoserine mark is found at Ser-1191, Ser-1193, Ser-1224, Ser-1255, and Ser-1258. Positions Arg-1198–Thr-1250 form a coiled coil. Thr-1265 bears the Phosphothreonine mark. 9 positions are modified to phosphoserine: Ser-1300, Ser-1357, Ser-1360, Ser-1385, Ser-1386, Ser-1389, Ser-1394, Ser-1395, and Ser-1403. Residues Asn-1380 to Thr-1418 are disordered. Residues Ser-1385 to Pro-1397 are compositionally biased toward low complexity. The segment covering Thr-1398–Cys-1410 has biased composition (polar residues). Thr-1404 carries the post-translational modification Phosphothreonine. Phosphoserine is present on residues Ser-1406 and Ser-1445. Phosphothreonine is present on Thr-1454. Ser-1455 carries the phosphoserine modification. Phosphothreonine occurs at positions 1466 and 1470. The interval Thr-1485–Arg-1511 is disordered. Phosphoserine occurs at positions 1491, 1497, 1501, 1510, and 1530. The span at Ser-1491–Thr-1502 shows a compositional bias: basic and acidic residues. Thr-1534 is modified (phosphothreonine). At Ser-1540 the chain carries Phosphoserine. Thr-1548 carries the post-translational modification Phosphothreonine. Ser-1564 and Ser-1566 each carry phosphoserine. Residue Thr-1580 is modified to Phosphothreonine. An Alpha-type protein kinase domain is found at Ile-1591–Leu-1821. Phosphoserine occurs at positions 1595 and 1612. ADP contacts are provided by Gly-1618, Gly-1619, Leu-1620, Arg-1621, and Lys-1645. Ser-1657 bears the Phosphoserine mark. A Phosphothreonine modification is found at Thr-1682. Glu-1717, Glu-1718, and Met-1720 together coordinate ADP. Position 1750 (His-1750) interacts with Zn(2+). Asp-1764 acts as the Proton acceptor in catalysis. Asp-1774 is a binding site for ADP. Ser-1776 carries the phosphoserine modification. Residues His-1807, Cys-1809, and Cys-1813 each coordinate Zn(2+). Phosphothreonine is present on Thr-1827. A disordered region spans residues Asp-1840 to Leu-1862. 2 positions are modified to phosphoserine: Ser-1848 and Ser-1857.

This sequence in the C-terminal section; belongs to the protein kinase superfamily. Alpha-type protein kinase family. ALPK subfamily. It in the N-terminal section; belongs to the transient receptor (TC 1.A.4) family. LTrpC subfamily. TRPM7 sub-subfamily. Homodimer. Homotetramer. Forms heteromers with TRPM6; heteromeric channels are functionally different from the homomeric channels. Interacts with PLCB1. Zn(2+) serves as cofactor. In terms of processing, palmitoylated; palmitoylation at Cys-1143, Cys-1144 and Cys-1146 promotes TRPM7 trafficking from the Golgi to the surface membrane. Autophosphorylated; autophosphorylation regulates TRPM7 kinase activity towards its substrates. Post-translationally, the C-terminal kinase domain can be cleaved from the channel segment in a cell-type-specific fashion. TRPM7 is cleaved by caspase-8, dissociating the kinase from the ion-conducting pore. The cleaved kinase fragments (M7CKs) can translocate to the cell nucleus and binds chromatin-remodeling complex proteins in a Zn(2+)-dependent manner to ultimately phosphorylate specific Ser/Thr residues of histones.

Its subcellular location is the cell membrane. The protein localises to the cytoplasmic vesicle membrane. It is found in the nucleus. The catalysed reaction is L-seryl-[protein] + ATP = O-phospho-L-seryl-[protein] + ADP + H(+). It carries out the reaction L-threonyl-[protein] + ATP = O-phospho-L-threonyl-[protein] + ADP + H(+). It catalyses the reaction Mg(2+)(in) = Mg(2+)(out). The enzyme catalyses Ca(2+)(in) = Ca(2+)(out). The catalysed reaction is Zn(2+)(in) = Zn(2+)(out). With respect to regulation, channel displays constitutive activity. Channel activity is negatively regulated by cytosolic Mg(2+), Mg-ATP, low intracellular pH. Resting free cytosolic Mg(2+) and Mg-ATP concentrations seem to be sufficient to block native TRPM7 channel activity. TRPM7 channel activity is highly dependent on membrane levels of phosphatidylinositol 4,5 bisphosphate (PIP2). PIP2 hydrolysis negatively regulates TRPM7 channel activity. TRPM7 kinase activity does not affect channel activity. The kinase activity is controlled through the autophosphorylation of a serine/threonine-rich region located N-terminal to the catalytic domain. Bifunctional protein that combines an ion channel with an intrinsic kinase domain, enabling it to modulate cellular functions either by conducting ions through the pore or by phosphorylating downstream proteins via its kinase domain. The channel is highly permeable to divalent cations, specifically calcium (Ca2+), magnesium (Mg2+) and zinc (Zn2+) and mediates their influx. Controls a wide range of biological processes such as Ca2(+), Mg(2+) and Zn(2+) homeostasis, vesicular Zn(2+) release channel and intracellular Ca(2+) signaling, embryonic development, immune responses, cell motility, proliferation and differentiation. The C-terminal alpha-kinase domain autophosphorylates cytoplasmic residues of TRPM7. TRPM7 phosphorylates SMAD2, suggesting that TRPM7 kinase may play a role in activating SMAD signaling pathways. In vitro, TRPM7 kinase phosphorylates ANXA1 (annexin A1), myosin II isoforms and a variety of proteins with diverse cellular functions. Its function is as follows. The cleaved channel exhibits substantially higher current and potentiates Fas receptor signaling. Functionally, the C-terminal kinase domain can be cleaved from the channel segment in a cell-type-specific fashion. In immune cells, the TRPM7 kinase domain is clipped from the channel domain by caspases in response to Fas-receptor stimulation. The cleaved kinase fragments can translocate to the nucleus, and bind chromatin-remodeling complex proteins in a Zn(2+)-dependent manner to ultimately phosphorylate specific Ser/Thr residues of histones known to be functionally important for cell differentiation and embryonic development. The chain is Transient receptor potential cation channel subfamily M member 7 from Rattus norvegicus (Rat).